We begin with the raw amino-acid sequence, 451 residues long: MLDPILLRKDLQTVVDRLKSRGVDFDIARFNELESRRKAVQTETESQQARRNALAKQIGQLKGKGAPEAEVQAVMAESQALPARLKALEDELAQTQAQLNDLLMSVPNLPHASVPQGASSDENVEVRRWLPGAADERGNPAALGFEVRDHVAVGEPLGLDFDLAARLSGARFSFMRGQMARLHRALAQFMLDLQTGTHGYTECYTPYIVNSSTLFGTGQLPKFKDDMFFVTKGGGDDEPKVDEQGNPLAREDQYLISTSEITLTSVVRETIVAGADLPLRLTAHTPCFRSEAGSGGRDTRGMIRQHQFDKVEMVQIAHPEHSYEALEEMVGHAERVLQLLELPYRVMLLCTGDMGFGSAKTYDLEVWLPAQDTWREISSVSNCETFQARRMQARFRNAQNKPEYVHTLNGSGLAVGRALVAVLENCQQADGSVRVPAVLQPYMGGLTVLEP.

An L-serine-binding site is contributed by 258-260 (TSE). 289–291 (RSE) serves as a coordination point for ATP. Residue Glu312 participates in L-serine binding. 376–379 (EISS) contributes to the ATP binding site. Ser411 lines the L-serine pocket.

The protein belongs to the class-II aminoacyl-tRNA synthetase family. Type-1 seryl-tRNA synthetase subfamily. Homodimer. The tRNA molecule binds across the dimer.

It localises to the cytoplasm. The catalysed reaction is tRNA(Ser) + L-serine + ATP = L-seryl-tRNA(Ser) + AMP + diphosphate + H(+). It catalyses the reaction tRNA(Sec) + L-serine + ATP = L-seryl-tRNA(Sec) + AMP + diphosphate + H(+). The protein operates within aminoacyl-tRNA biosynthesis; selenocysteinyl-tRNA(Sec) biosynthesis; L-seryl-tRNA(Sec) from L-serine and tRNA(Sec): step 1/1. Its function is as follows. Catalyzes the attachment of serine to tRNA(Ser). Is also able to aminoacylate tRNA(Sec) with serine, to form the misacylated tRNA L-seryl-tRNA(Sec), which will be further converted into selenocysteinyl-tRNA(Sec). The protein is Serine--tRNA ligase of Bordetella bronchiseptica (strain ATCC BAA-588 / NCTC 13252 / RB50) (Alcaligenes bronchisepticus).